Consider the following 121-residue polypeptide: Large ribosomal subunit protein bL20 (121 aa).

Belongs to the bacterial ribosomal protein bL20 family.

Its function is as follows. Binds directly to 23S ribosomal RNA and is necessary for the in vitro assembly process of the 50S ribosomal subunit. It is not involved in the protein synthesizing functions of that subunit. This chain is Large ribosomal subunit protein bL20, found in Polynucleobacter necessarius subsp. necessarius (strain STIR1).